Consider the following 262-residue polypeptide: Type III pantothenate kinase (262 aa).

9–16 (DIGNTNVK) lines the ATP pocket. Substrate is bound by residues Y103 and 110–113 (GADR). The Proton acceptor role is filled by D112. K(+) is bound at residue D134. T137 provides a ligand contact to ATP. Residue T190 participates in substrate binding.

It belongs to the type III pantothenate kinase family. In terms of assembly, homodimer. It depends on NH4(+) as a cofactor. The cofactor is K(+).

The protein resides in the cytoplasm. The enzyme catalyses (R)-pantothenate + ATP = (R)-4'-phosphopantothenate + ADP + H(+). It functions in the pathway cofactor biosynthesis; coenzyme A biosynthesis; CoA from (R)-pantothenate: step 1/5. In terms of biological role, catalyzes the phosphorylation of pantothenate (Pan), the first step in CoA biosynthesis. The protein is Type III pantothenate kinase of Nitratidesulfovibrio vulgaris (strain ATCC 29579 / DSM 644 / CCUG 34227 / NCIMB 8303 / VKM B-1760 / Hildenborough) (Desulfovibrio vulgaris).